The primary structure comprises 294 residues: N-acetylmuramic acid 6-phosphate etherase (294 aa).

One can recognise an SIS domain in the interval 54–217 (VIKSFEEEGR…STASMIGVGK (164 aa)). The active-site Proton donor is the Glu82. Glu113 is a catalytic residue.

It belongs to the GCKR-like family. MurNAc-6-P etherase subfamily. In terms of assembly, homodimer.

It carries out the reaction N-acetyl-D-muramate 6-phosphate + H2O = N-acetyl-D-glucosamine 6-phosphate + (R)-lactate. It participates in amino-sugar metabolism; N-acetylmuramate degradation. In terms of biological role, specifically catalyzes the cleavage of the D-lactyl ether substituent of MurNAc 6-phosphate, producing GlcNAc 6-phosphate and D-lactate. The polypeptide is N-acetylmuramic acid 6-phosphate etherase (Bacillus cereus (strain ATCC 14579 / DSM 31 / CCUG 7414 / JCM 2152 / NBRC 15305 / NCIMB 9373 / NCTC 2599 / NRRL B-3711)).